The chain runs to 233 residues: Defense protein 3 (233 aa).

The N-terminal stretch at 1–17 is a signal peptide; it reads MFGKFVLLAVLLVGVNS. Positions 18–45 are excised as a propeptide; it reads RYVIIEDPVYYIEDHELPEQWTSSRVRR.

The protein belongs to the attacin/sarcotoxin-2 family.

The protein localises to the secreted. Has antibacterial activity against both Gram-positive and Gram-negative bacteria. The sequence is that of Defense protein 3 from Lonomia obliqua (Moth).